We begin with the raw amino-acid sequence, 55 residues long: Potassium channel toxin alpha-KTX 12 Sp2 (55 aa).

The first 18 residues, 1–18 (MRLAIILLLMTTIVLTIG), serve as a signal peptide directing secretion. 3 disulfide bridges follow: cysteine 26–cysteine 46, cysteine 32–cysteine 51, and cysteine 36–cysteine 53.

This sequence belongs to the short scorpion toxin superfamily. Potassium channel inhibitor family. Alpha-KTx 12 subfamily. Expressed by the venom gland.

Its subcellular location is the secreted. Its function is as follows. Blocks mouse voltage-gated potassium channels Kv1.3/KCNA3 (IC(50)=0.3-30 nM), when the channel is expressed in Jurkat T cells or in HEK293 cells. Also shows a weaker inhibition on mKv1.2/KCNA2 (IC(50)=56.9 nM) and mKv1.1/KCNA1 (IC(50)=485 nM). Probably through the inhibition of both Kv1.2/KCNA2 and Kv1.3/KCNA3, the toxin also reduces the free calcium concentration in Jurkat T cells, inhibits the activation of Jurkat T cells and reduces the release of inflammatory cytokines interleukin-2, showing a strong immunosuppressant effect. The sequence is that of Potassium channel toxin alpha-KTX 12 Sp2 from Scorpiops pococki (Scorpion).